Consider the following 293-residue polypeptide: Phosphate-binding protein PstS 2 (293 aa).

A signal peptide spans 1–23; that stretch reads MKKHKMLSLLAVSGLMGIGILAG. Cys24 carries N-palmitoyl cysteine lipidation. Cys24 carries the S-diacylglycerol cysteine lipid modification.

The protein belongs to the PstS family. The complex is composed of two ATP-binding proteins (PstB), two transmembrane proteins (PstC and PstA) and a solute-binding protein (PstS).

Its subcellular location is the cell membrane. Its function is as follows. Part of the ABC transporter complex PstSACB involved in phosphate import. In Streptococcus agalactiae serotype III (strain NEM316), this protein is Phosphate-binding protein PstS 2 (pstS2).